The primary structure comprises 160 residues: Nucleotide-binding protein Ping_2261 (160 aa).

Belongs to the YajQ family.

Its function is as follows. Nucleotide-binding protein. The polypeptide is Nucleotide-binding protein Ping_2261 (Psychromonas ingrahamii (strain DSM 17664 / CCUG 51855 / 37)).